Reading from the N-terminus, the 524-residue chain is Bifunctional purine biosynthesis protein PurH (524 aa).

The MGS-like domain occupies 1 to 145 (MIQQALLSVS…KNHRDVTVIV (145 aa)).

The protein belongs to the PurH family.

It catalyses the reaction (6R)-10-formyltetrahydrofolate + 5-amino-1-(5-phospho-beta-D-ribosyl)imidazole-4-carboxamide = 5-formamido-1-(5-phospho-D-ribosyl)imidazole-4-carboxamide + (6S)-5,6,7,8-tetrahydrofolate. The catalysed reaction is IMP + H2O = 5-formamido-1-(5-phospho-D-ribosyl)imidazole-4-carboxamide. It functions in the pathway purine metabolism; IMP biosynthesis via de novo pathway; 5-formamido-1-(5-phospho-D-ribosyl)imidazole-4-carboxamide from 5-amino-1-(5-phospho-D-ribosyl)imidazole-4-carboxamide (10-formyl THF route): step 1/1. It participates in purine metabolism; IMP biosynthesis via de novo pathway; IMP from 5-formamido-1-(5-phospho-D-ribosyl)imidazole-4-carboxamide: step 1/1. This Ralstonia nicotianae (strain ATCC BAA-1114 / GMI1000) (Ralstonia solanacearum) protein is Bifunctional purine biosynthesis protein PurH.